A 142-amino-acid chain; its full sequence is Large ribosomal subunit protein uL11 (142 aa).

Belongs to the universal ribosomal protein uL11 family. Part of the ribosomal stalk of the 50S ribosomal subunit. Interacts with L10 and the large rRNA to form the base of the stalk. L10 forms an elongated spine to which L12 dimers bind in a sequential fashion forming a multimeric L10(L12)X complex. One or more lysine residues are methylated.

Its function is as follows. Forms part of the ribosomal stalk which helps the ribosome interact with GTP-bound translation factors. The chain is Large ribosomal subunit protein uL11 from Methylocella silvestris (strain DSM 15510 / CIP 108128 / LMG 27833 / NCIMB 13906 / BL2).